A 122-amino-acid chain; its full sequence is UPF0102 protein RHE_CH00320 (122 aa).

This sequence belongs to the UPF0102 family.

The sequence is that of UPF0102 protein RHE_CH00320 from Rhizobium etli (strain ATCC 51251 / DSM 11541 / JCM 21823 / NBRC 15573 / CFN 42).